The primary structure comprises 634 residues: tRNA uridine 5-carboxymethylaminomethyl modification enzyme MnmG (634 aa).

Gly-14–Gly-19 is a binding site for FAD. Gly-279 to Phe-293 lines the NAD(+) pocket.

It belongs to the MnmG family. In terms of assembly, homodimer. Heterotetramer of two MnmE and two MnmG subunits. It depends on FAD as a cofactor.

The protein localises to the cytoplasm. NAD-binding protein involved in the addition of a carboxymethylaminomethyl (cmnm) group at the wobble position (U34) of certain tRNAs, forming tRNA-cmnm(5)s(2)U34. This Xanthomonas oryzae pv. oryzae (strain KACC10331 / KXO85) protein is tRNA uridine 5-carboxymethylaminomethyl modification enzyme MnmG.